The following is a 478-amino-acid chain: Cysteine--tRNA ligase (478 aa).

Position 37 (cysteine 37) interacts with Zn(2+). A 'HIGH' region motif is present at residues 39–49; that stretch reads PTVYHYAHIGN. Zn(2+) is bound by residues cysteine 224, histidine 249, and glutamate 253. A 'KMSKS' region motif is present at residues 281–285; that stretch reads KMSKS. Lysine 284 contacts ATP.

This sequence belongs to the class-I aminoacyl-tRNA synthetase family. In terms of assembly, monomer. The cofactor is Zn(2+).

It localises to the cytoplasm. It carries out the reaction tRNA(Cys) + L-cysteine + ATP = L-cysteinyl-tRNA(Cys) + AMP + diphosphate. This is Cysteine--tRNA ligase from Protochlamydia amoebophila (strain UWE25).